Consider the following 441-residue polypeptide: Maltose-6'-phosphate glucosidase MalH (441 aa).

4-70 (FSVVIAGGGS…PEIEFLATTN (67 aa)) serves as a coordination point for NAD(+). Arg-93 and Asn-147 together coordinate substrate. Cys-169 contributes to the Mn(2+) binding site. The active-site Proton donor is the Asp-170. A Mn(2+)-binding site is contributed by His-200. The Proton acceptor role is filled by Tyr-264. Arg-284 lines the substrate pocket.

In terms of assembly, homotetramer. Requires NAD(+) as cofactor. Mn(2+) is required as a cofactor.

It carries out the reaction alpha-maltose 6'-phosphate + H2O = D-glucose 6-phosphate + D-glucose. Its function is as follows. Catalyzes the hydrolysis of O-alpha-linked disaccharide 6-phosphates, including maltose-6'P and all five phosphorylated isomers of sucrose, but not sucrose-6P. Does not hydrolyze beta-linked disaccharide 6-phosphates such as cellobiose-6'P and gentiobiose-6'P. Is involved in the dissimilation of maltose and related O-alpha-linked glucosides produced via the phosphoenolpyruvate-dependent sugar phosphotransferase system (PEP-PTS). The chain is Maltose-6'-phosphate glucosidase MalH (malH) from Clostridium acetobutylicum (strain ATCC 824 / DSM 792 / JCM 1419 / IAM 19013 / LMG 5710 / NBRC 13948 / NRRL B-527 / VKM B-1787 / 2291 / W).